The primary structure comprises 47 residues: Large ribosomal subunit protein bL34 (47 aa).

It belongs to the bacterial ribosomal protein bL34 family.

This is Large ribosomal subunit protein bL34 from Mycobacterium ulcerans (strain Agy99).